The sequence spans 333 residues: uncharacterized protein (333 aa).

The region spanning 67–274 is the Radical SAM core domain; the sequence is HFYPTTQVVS…LEMARNLAIE (208 aa). C82, C86, and C89 together coordinate [4Fe-4S] cluster.

Requires [4Fe-4S] cluster as cofactor.

This is an uncharacterized protein from Methanocaldococcus jannaschii (strain ATCC 43067 / DSM 2661 / JAL-1 / JCM 10045 / NBRC 100440) (Methanococcus jannaschii).